We begin with the raw amino-acid sequence, 492 residues long: Signal transduction histidine-protein kinase/phosphatase MprB (492 aa).

Topologically, residues 1 to 27 (MAFPPNSWRPTGPLPTSSLSLRWRVMM) are cytoplasmic. Residues 28–48 (LAMSMVALVVVLMAVAVYAVV) form a helical membrane-spanning segment. Topologically, residues 49–165 (SRALYDDLDN…TVQVLRRLGT (117 aa)) are extracellular. The helical transmembrane segment at 166 to 186 (VLLIVGGIGVAVAAIAGGAVA) threads the bilayer. The HAMP domain occupies 187–239 (RAGLRPVGRLTEAAERVARTDDLRPIPVVGSDELARLTEAFNMMLRALAESRE). Residues 187–492 (RAGLRPVGRL…DRGGHTVATE (306 aa)) lie on the Cytoplasmic side of the membrane. The Histidine kinase domain occupies 247–467 (DAGHELRTPL…SVHMLLPGQR (221 aa)). His250 carries the phosphohistidine; by autocatalysis modification. The interval 470–492 (DPGATRSAEGFVDDRGGHTVATE) is disordered.

Mg(2+) serves as cofactor. It depends on Mn(2+) as a cofactor. In terms of processing, autophosphorylated.

It is found in the cell membrane. The catalysed reaction is ATP + protein L-histidine = ADP + protein N-phospho-L-histidine.. Functionally, member of the two-component regulatory system MprB/MprA which contributes to maintaining a balance among several systems involved in stress resistance and is required for establishment and maintenance of persistent infection in the host. In response to environmental signals MprB acts both as a membrane-associated protein kinase that undergoes autophosphorylation and subsequently transfers the phosphate to MprA, and a protein phosphatase that dephosphorylates phospho-MprA. The sequence is that of Signal transduction histidine-protein kinase/phosphatase MprB (mprB) from Mycolicibacterium smegmatis (strain ATCC 700084 / mc(2)155) (Mycobacterium smegmatis).